Here is a 322-residue protein sequence, read N- to C-terminus: Breast cancer metastasis-suppressor 1-like protein (322 aa).

Residues 1–16 (MPVHSREKKESNHNDM) are compositionally biased toward basic and acidic residues. The segment at 1–56 (MPVHSREKKESNHNDMEVDYPENEGTSSEEDDSDSSSGSEEGDSSEMDDEDCERRR) is disordered. Residues 17–51 (EVDYPENEGTSSEEDDSDSSSGSEEGDSSEMDDED) are compositionally biased toward acidic residues. 2 coiled-coil regions span residues 50 to 82 (EDCERRRMECLDEMSNLEKQFTDLKDQLYKERL) and 147 to 178 (EKLLLYDTVQSELEEKIRRLEEDRHSIDITSE).

Belongs to the BRMS1 family.

The protein resides in the nucleus. Involved in the histone deacetylase (HDAC1)-dependent transcriptional repression activity. This Xenopus tropicalis (Western clawed frog) protein is Breast cancer metastasis-suppressor 1-like protein (brms1l).